The primary structure comprises 846 residues: Penicillin G acylase (846 aa).

An N-terminal signal peptide occupies residues M1–A26. Position 178 (E178) interacts with Ca(2+). Positions A236–T289 are cleaved as a propeptide — spacer peptide. Catalysis depends on S290, which acts as the Nucleophile. Ca(2+)-binding residues include D362, V364, D365, P494, and D541.

This sequence belongs to the peptidase S45 family. Heterodimer of an alpha subunit and a beta subunit processed from the same precursor. Requires Ca(2+) as cofactor.

It localises to the periplasm. The enzyme catalyses a penicillin + H2O = 6-aminopenicillanate + a carboxylate. This Escherichia coli protein is Penicillin G acylase (pac).